Here is a 154-residue protein sequence, read N- to C-terminus: Protein X (154 aa).

Residues 68-117 form a mitochondrial targeting sequence region; that stretch reads PCALRFTSARRMETTVNAHQVLPKVLHKRTLGLSAMSTTDLEAYFKDCLF.

Belongs to the orthohepadnavirus protein X family. May form homodimer. May interact with host CEBPA, CFLAR, CREB1, DDB1, E4F1, HBXIP, HSPD1/HSP60, NFKBIA, POLR2E and SMAD4. Interacts with host SMC5-SMC6 complex and induces its degradation. Interacts with host TRPC4AP; leading to prevent ubiquitination of TRPC4AP. Interacts with host PLSCR1; this interaction promotes ubiquitination and degradation of HBx and impairs HBx-mediated cell proliferation. Post-translationally, a fraction may be phosphorylated in insect cells and HepG2 cells, a human hepatoblastoma cell line. Phosphorylated in vitro by host protein kinase C or mitogen-activated protein kinase. N-acetylated in insect cells.

Its subcellular location is the host cytoplasm. The protein resides in the host nucleus. The protein localises to the host mitochondrion. Its function is as follows. Multifunctional protein that plays a role in silencing host antiviral defenses and promoting viral transcription. Does not seem to be essential for HBV infection. May be directly involved in development of cirrhosis and liver cancer (hepatocellular carcinoma). Most of cytosolic activities involve modulation of cytosolic calcium. The effect on apoptosis is controversial depending on the cell types in which the studies have been conducted. May induce apoptosis by localizing in mitochondria and causing loss of mitochondrial membrane potential. May also modulate apoptosis by binding host CFLAR, a key regulator of the death-inducing signaling complex (DISC). Promotes viral transcription by using the host E3 ubiquitin ligase DDB1 to target the SMC5-SMC6 complex to proteasomal degradation. This host complex would otherwise bind to viral episomal DNA, and prevents its transcription. Moderately stimulates transcription of many different viral and cellular transcription elements. Promoters and enhancers stimulated by HBx contain DNA binding sites for NF-kappa-B, AP-1, AP-2, c-EBP, ATF/CREB, or the calcium-activated factor NF-AT. This Hepatitis B virus genotype C subtype adr (isolate Japan/Nishioka/1983) (HBV-C) protein is Protein X.